The sequence spans 317 residues: Heme-binding protein HMX1 (317 aa).

Residues 1 to 289 (MEDSSNTIIP…FNKDSATRRA (289 aa)) are Cytoplasmic-facing. Residues 290 to 310 (LHTVMLLVLSIIAIWVLYFLV) traverse the membrane as a helical; Anchor for type IV membrane protein segment.

Heme serves as cofactor.

Its subcellular location is the endoplasmic reticulum membrane. Its function is as follows. Plays an important role in the degradation of heme under conditions of iron deprivation. In Saccharomyces cerevisiae (strain ATCC 204508 / S288c) (Baker's yeast), this protein is Heme-binding protein HMX1 (HMX1).